The chain runs to 794 residues: Striatin-3 (794 aa).

The residue at position 1 (Met-1) is an N-acetylmethionine. Residues 1–12 (MDELAGGGGGQG) are compositionally biased toward gly residues. The tract at residues 1 to 59 (MDELAGGGGGQGMAVPPRPQQGPGGNLSLPPGANGAPGGGGPPAAETAGPPAGPELSRP) is disordered. The interval 70–78 (YIQHEWARF) is caveolin-binding. Residues 76–135 (ARFEMERAHWEVERAELQARIAFLQGERKGQENLKKDLVRRIKMLEYALKQERAKYHKLK) adopt a coiled-coil conformation. Thr-149 is subject to Phosphothreonine. The interval 164-181 (QNSQLTWKQGRQLLRQYL) is calmodulin-binding. Phosphoserine is present on residues Ser-200, Ser-212, Ser-227, Ser-255, and Ser-332. Residues 309-339 (EDGEGAGEARSSGDGTEWDKDDLSPTAEVWD) are disordered. 6 WD repeats span residues 475-514 (SHFD…PAKK), 528-567 (AHIG…VDPY), 581-620 (AHTD…PCIC), 676-715 (QSSN…MIHS), 718-757 (AHLD…CVQE), and 764-794 (KLDE…KVFV).

It belongs to the WD repeat striatin family. As to quaternary structure, tetramerizes. Part of the core of STRIPAK complexes composed of PP2A catalytic and scaffolding subunits, the striatins (PP2A regulatory subunits), the striatin-associated proteins MOB4, STRIP1 and STRIP2, PDCD10 and members of the STE20 kinases, such as STK24 and STK26. The STRIPAK complex can be extended by adapter proteins such as SLMAP:SIKE1 or CTTNBP2NL. Interacts with CDC42BPB.

The protein resides in the cytoplasm. Its subcellular location is the membrane. Functionally, calmodulin-binding scaffolding protein which is the center of the striatin-interacting phosphatase and kinase (STRIPAK) complexes. STRIPAK complexes have critical roles in protein (de)phosphorylation and are regulators of multiple signaling pathways including Hippo, MAPK, nuclear receptor and cytoskeleton remodeling. Different types of STRIPAK complexes are involved in a variety of biological processes such as cell growth, differentiation, apoptosis, metabolism and immune regulation. This chain is Striatin-3 (Strn3), found in Rattus norvegicus (Rat).